Here is an 881-residue protein sequence, read N- to C-terminus: Alanine--tRNA ligase (881 aa).

Belongs to the class-II aminoacyl-tRNA synthetase family.

Its subcellular location is the cytoplasm. The catalysed reaction is tRNA(Ala) + L-alanine + ATP = L-alanyl-tRNA(Ala) + AMP + diphosphate. Its function is as follows. Catalyzes the attachment of alanine to tRNA(Ala) in a two-step reaction: alanine is first activated by ATP to form Ala-AMP and then transferred to the acceptor end of tRNA(Ala). Also edits incorrectly charged Ser-tRNA(Ala) and Gly-tRNA(Ala) via its editing domain. The protein is Alanine--tRNA ligase (alaS) of Lacticaseibacillus paracasei (strain ATCC 334 / BCRC 17002 / CCUG 31169 / CIP 107868 / KCTC 3260 / NRRL B-441) (Lactobacillus paracasei).